The chain runs to 180 residues: Large ribosomal subunit protein uL6 (180 aa).

It belongs to the universal ribosomal protein uL6 family. Part of the 50S ribosomal subunit.

This protein binds to the 23S rRNA, and is important in its secondary structure. It is located near the subunit interface in the base of the L7/L12 stalk, and near the tRNA binding site of the peptidyltransferase center. The chain is Large ribosomal subunit protein uL6 from Borrelia garinii subsp. bavariensis (strain ATCC BAA-2496 / DSM 23469 / PBi) (Borreliella bavariensis).